The chain runs to 713 residues: Calpain-1 catalytic subunit (713 aa).

A Calpain catalytic domain is found at 55–354 (LFQDDAFPPV…FTKLEICNLT (300 aa)). Residues cysteine 115, histidine 272, and asparagine 296 contribute to the active site. Threonine 354 is modified (phosphothreonine). Positions 355–525 (PDALKSRTLR…KKAGTQELDD (171 aa)) are domain III. Positions 526–541 (QIQANLPDEKVLSEEE) are linker. The domain IV stretch occupies residues 542 to 712 (IDDNFKTLFS…LFKWLQLTMF (171 aa)). 4 EF-hand domains span residues 557–575 (DMEI…IISK), 584–609 (FSLE…LVEF), 614–649 (NRIR…AGFK), and 679–713 (VRLE…TMFA). Aspartate 597, aspartate 599, asparagine 601, lysine 603, glutamate 608, aspartate 627, aspartate 629, serine 631, serine 633, and glutamate 638 together coordinate Ca(2+).

Belongs to the peptidase C2 family. In terms of assembly, forms a heterodimer with a small (regulatory) subunit CAPNS1. Ca(2+) serves as cofactor. In terms of processing, undergoes calcium-induced successive autoproteolytic cleavages that generate a membrane-bound 78 kDa active form and an intracellular 75 kDa active form. Calpastatin reduces with high efficiency the transition from 78 kDa to 75 kDa calpain forms.

It localises to the cytoplasm. Its subcellular location is the cell membrane. The catalysed reaction is Broad endopeptidase specificity.. Its activity is regulated as follows. Activated by micromolar concentrations of calcium and inhibited by calpastatin. Functionally, calcium-regulated non-lysosomal thiol-protease which catalyzes limited proteolysis of substrates involved in cytoskeletal remodeling and signal transduction. Proteolytically cleaves CTBP1 at 'Asn-364', 'Gly-377' and 'His-399'. Cleaves and activates caspase-7 (CASP7). The polypeptide is Calpain-1 catalytic subunit (Rattus norvegicus (Rat)).